Here is a 194-residue protein sequence, read N- to C-terminus: Peptide deformylase (194 aa).

Fe cation-binding residues include Cys105 and His147. The active site involves Glu148. A Fe cation-binding site is contributed by His151.

Belongs to the polypeptide deformylase family. Fe(2+) is required as a cofactor.

The enzyme catalyses N-terminal N-formyl-L-methionyl-[peptide] + H2O = N-terminal L-methionyl-[peptide] + formate. Functionally, removes the formyl group from the N-terminal Met of newly synthesized proteins. Requires at least a dipeptide for an efficient rate of reaction. N-terminal L-methionine is a prerequisite for activity but the enzyme has broad specificity at other positions. The polypeptide is Peptide deformylase (Flavobacterium psychrophilum (strain ATCC 49511 / DSM 21280 / CIP 103535 / JIP02/86)).